Here is a 228-residue protein sequence, read N- to C-terminus: Leucyl/phenylalanyl-tRNA--protein transferase (228 aa).

The protein belongs to the L/F-transferase family.

The protein resides in the cytoplasm. The catalysed reaction is N-terminal L-lysyl-[protein] + L-leucyl-tRNA(Leu) = N-terminal L-leucyl-L-lysyl-[protein] + tRNA(Leu) + H(+). The enzyme catalyses N-terminal L-arginyl-[protein] + L-leucyl-tRNA(Leu) = N-terminal L-leucyl-L-arginyl-[protein] + tRNA(Leu) + H(+). It carries out the reaction L-phenylalanyl-tRNA(Phe) + an N-terminal L-alpha-aminoacyl-[protein] = an N-terminal L-phenylalanyl-L-alpha-aminoacyl-[protein] + tRNA(Phe). Its function is as follows. Functions in the N-end rule pathway of protein degradation where it conjugates Leu, Phe and, less efficiently, Met from aminoacyl-tRNAs to the N-termini of proteins containing an N-terminal arginine or lysine. This is Leucyl/phenylalanyl-tRNA--protein transferase from Thiobacillus denitrificans (strain ATCC 25259 / T1).